The following is a 461-amino-acid chain: GTPase Der (461 aa).

EngA-type G domains are found at residues 2 to 164 (QKII…EDDV) and 197 to 368 (IRVG…KNFT). Residues 8–15 (GKPNVGKS), 55–59 (DSGGL), 116–119 (NKID), 203–210 (GRVNVGKS), 250–254 (DTAGI), and 314–317 (NKWD) each bind GTP. A KH-like domain is found at 369 to 453 (QKIQTSKLNE…PIVLAPKKRG (85 aa)).

The protein belongs to the TRAFAC class TrmE-Era-EngA-EngB-Septin-like GTPase superfamily. EngA (Der) GTPase family. In terms of assembly, associates with the 50S ribosomal subunit.

Functionally, GTPase that plays an essential role in the late steps of ribosome biogenesis. In Campylobacter curvus (strain 525.92), this protein is GTPase Der.